The chain runs to 526 residues: Adenylosuccinate synthetase (526 aa).

GTP is bound by residues 102–108 and 130–132; these read GDEGKGK and GHT. Catalysis depends on Asp103, which acts as the Proton acceptor. Mg(2+) contacts are provided by Asp103 and Gly130. Residues 103–106, 128–131, Thr219, Arg233, Asn310, Thr325, and Arg392 contribute to the IMP site; these read DEGK and NAGH. The active-site Proton donor is the His131. Residue 388–394 participates in substrate binding; it reads TTTGRTR. Residues Arg394, 420–422, and 502–504 contribute to the GTP site; these read KVD and GVG.

This sequence belongs to the adenylosuccinate synthetase family. As to quaternary structure, homodimer. Mg(2+) serves as cofactor.

It is found in the cytoplasm. It catalyses the reaction IMP + L-aspartate + GTP = N(6)-(1,2-dicarboxyethyl)-AMP + GDP + phosphate + 2 H(+). It participates in purine metabolism; AMP biosynthesis via de novo pathway; AMP from IMP: step 1/2. Functionally, plays an important role in the de novo pathway and in the salvage pathway of purine nucleotide biosynthesis. Catalyzes the first committed step in the biosynthesis of AMP from IMP. This chain is Adenylosuccinate synthetase, found in Phaeodactylum tricornutum (strain CCAP 1055/1).